The sequence spans 331 residues: Glycerophosphodiester phosphodiesterase 1 (331 aa).

The Cytoplasmic portion of the chain corresponds to 1–3 (MWL). A helical transmembrane segment spans residues 4–24 (WEDQGGLLGPFSFVLVLLLVV). The Lumenal segment spans residues 25 to 248 (TRSPFNACVL…PRYSVFWKQS (224 aa)). A GP-PDE domain is found at 65–331 (VSAIAHRGGS…SMLEDCAPHF (267 aa)). Positions 97 and 99 each coordinate Mg(2+). A glycan (N-linked (GlcNAc...) asparagine) is linked at Asn-168. Asp-174 is a Mg(2+) binding site. Residues 249 to 269 (VFVVLDILLDWSMHNVLWYLC) traverse the membrane as a helical segment. Residues 270–331 (GISAFLMQKD…SMLEDCAPHF (62 aa)) are Cytoplasmic-facing.

The protein belongs to the glycerophosphoryl diester phosphodiesterase family. As to quaternary structure, interacts with PRAF2. Interacts with RGS16. Mg(2+) is required as a cofactor. N-glycosylated. Detected in heart, brain, lung, liver, skeletal muscle, kidney, pituitary and testis.

Its subcellular location is the cell membrane. It localises to the cytoplasmic vesicle membrane. The enzyme catalyses sn-glycero-3-phospho-1D-myo-inositol + H2O = myo-inositol + sn-glycerol 3-phosphate + H(+). It catalyses the reaction 1-O-(1Z-octadecenyl)-sn-glycero-3-phospho-(N-5Z,8Z,11Z,14Z-eicosatetraenoyl)-ethanolamine + H2O = 1-O-(1Z-octadecenyl)-sn-glycero-3-phosphate + N-(5Z,8Z,11Z,14Z-eicosatetraenoyl)-ethanolamine + H(+). It carries out the reaction 1-O-(1Z-octadecenyl)-sn-glycero-3-phospho-(N-9Z-octadecenoyl)-ethanolamine + H2O = 1-O-(1Z-octadecenyl)-sn-glycero-3-phosphate + N-(9Z-octadecenoyl) ethanolamine + H(+). The catalysed reaction is 1-O-(1Z-octadecenyl)-sn-glycero-3-phospho-N-hexadecanoyl-ethanolamine + H2O = 1-O-(1Z-octadecenyl)-sn-glycero-3-phosphate + N-hexadecanoylethanolamine + H(+). The enzyme catalyses N-(4Z,7Z,10Z,13Z,16Z,19Z)-docosahexaenoyl-sn-glycero-3-phosphoethanolamine + H2O = N-(4Z,7Z,10Z,13Z,16Z,19Z)-docosahexaenoyl ethanolamine + sn-glycerol 3-phosphate + H(+). It catalyses the reaction N-eicosanoyl-sn-glycero-3-phosphoethanolamine + H2O = N-eicosanoyl ethanolamine + sn-glycerol 3-phosphate + H(+). It carries out the reaction N-hexadecanoyl-sn-glycero-3-phosphoethanolamine + H2O = N-hexadecanoylethanolamine + sn-glycerol 3-phosphate + H(+). The catalysed reaction is N-(9Z-octadecenoyl)-sn-glycero-3-phosphoethanolamine + H2O = N-(9Z-octadecenoyl) ethanolamine + sn-glycerol 3-phosphate + H(+). The enzyme catalyses N-(5Z,8Z,11Z,14Z-eicosatetraenoyl)-sn-glycero-3-phosphoethanolamine + H2O = N-(5Z,8Z,11Z,14Z-eicosatetraenoyl)-ethanolamine + sn-glycerol 3-phosphate + H(+). With respect to regulation, inhibited by EDTA, calcium chloride, and zinc chloride. Enhanced by magnesium chloride. Glycerophosphodiester phosphodiesterase activity can be modulated by G-protein signaling pathways. Functionally, hydrolyzes the phosphodiester bond of glycerophosphodiesters such as glycerophosphoinositol (GroPIns) and glycerophosphoethanolamine (GroPEth), to yield a glycerol phosphate and an alcohol. Hydrolyzes glycerophospho-N-acylethanolamines to N-acylethanolamines in the brain and participates in bioactive N-acylethanolamine biosynthesis such as anandamide (an endocannabinoid), N-palmitoylethanolamine (an anti-inflammatory), and N-oleoylethanolamine (an anorexic). In addition, has a lysophospholipase D activity by hydrolyzing N-acyl-lysoplasmenylethanolamine (N-acyl-lysoPlsEt) to N-acylethanolamine. However lysophospholipase D activity is lower than glycerophosphodiester phosphodiesterase activity. Has little or no activity towards glycerophosphocholine. The chain is Glycerophosphodiester phosphodiesterase 1 from Rattus norvegicus (Rat).